We begin with the raw amino-acid sequence, 247 residues long: ATP synthase subunit a, chloroplastic (247 aa).

5 consecutive transmembrane segments (helical) span residues 38–58 (QVLITSWVVIAILLGSATIAV), 95–115 (VPFIGTMFLFIFVSNWSGALL), 134–154 (INTTVALALPTSMAYFYAGFT), 199–219 (LVVVVLVSLVPSVVPIPVMFL), and 220–240 (GLFTSGIQALIFATLAAAYIG).

The protein belongs to the ATPase A chain family. In terms of assembly, F-type ATPases have 2 components, CF(1) - the catalytic core - and CF(0) - the membrane proton channel. CF(1) has five subunits: alpha(3), beta(3), gamma(1), delta(1), epsilon(1). CF(0) has four main subunits: a, b, b' and c.

Its subcellular location is the plastid. It is found in the chloroplast thylakoid membrane. Key component of the proton channel; it plays a direct role in the translocation of protons across the membrane. The chain is ATP synthase subunit a, chloroplastic from Liriodendron tulipifera (Tuliptree).